Here is a 576-residue protein sequence, read N- to C-terminus: Eukaryotic translation initiation factor 2A (576 aa).

WD repeat units follow at residues 71–119 (LPAA…LVFS), 266–307 (DREG…VSII), 308–349 (PPAP…KKIT), and 351–396 (VEAA…MFYE). Disordered stretches follow at residues 422 to 461 (SASL…QNST) and 475 to 505 (GSAN…NNKK). A compositionally biased stretch (polar residues) spans 475 to 486 (GSANKHVNSSRQ).

The protein belongs to the WD repeat EIF2A family.

The protein resides in the cytoplasm. Its function is as follows. Functions in the early steps of protein synthesis of a small number of specific mRNAs. Acts by directing the binding of methionyl-tRNAi to 40S ribosomal subunits. In contrast to the eIF-2 complex, it binds methionyl-tRNAi to 40S subunits in a codon-dependent manner, whereas the eIF-2 complex binds methionyl-tRNAi to 40S subunits in a GTP-dependent manner. The protein is Eukaryotic translation initiation factor 2A of Schizosaccharomyces pombe (strain 972 / ATCC 24843) (Fission yeast).